Reading from the N-terminus, the 471-residue chain is Cysteine--tRNA ligase (471 aa).

Cys29 lines the Zn(2+) pocket. The 'HIGH' region motif lies at 31 to 41; it reads PTVYDYFHIGN. Positions 212, 237, and 241 each coordinate Zn(2+). The 'KMSKS' region motif lies at 269–273; sequence KMSKS. Lys272 provides a ligand contact to ATP.

The protein belongs to the class-I aminoacyl-tRNA synthetase family. As to quaternary structure, monomer. Requires Zn(2+) as cofactor.

It is found in the cytoplasm. The catalysed reaction is tRNA(Cys) + L-cysteine + ATP = L-cysteinyl-tRNA(Cys) + AMP + diphosphate. The polypeptide is Cysteine--tRNA ligase (Symbiobacterium thermophilum (strain DSM 24528 / JCM 14929 / IAM 14863 / T)).